Reading from the N-terminus, the 277-residue chain is Hydroxypyruvate/pyruvate aldolase (277 aa).

His54 functions as the Proton acceptor in the catalytic mechanism. Residues Glu158 and Asp184 each coordinate a divalent metal cation.

It belongs to the HpcH/HpaI aldolase family. A divalent metal cation is required as a cofactor.

It catalyses the reaction D-glyceraldehyde + 3-hydroxypyruvate = (3R,4S,5R)-3,4,5,6-tetrahydroxy-2-oxohexanoate. The enzyme catalyses D-glyceraldehyde + 3-hydroxypyruvate = 2-dehydro-D-gluconate. It carries out the reaction D-glyceraldehyde + 3-hydroxypyruvate = 2-dehydro-D-galactonate. The catalysed reaction is D-glyceraldehyde + pyruvate = 2-dehydro-3-deoxy-L-galactonate. Its function is as follows. Aldolase which can catalyze in vitro the aldolisation reaction between hydroxypyruvate (HPA) or pyruvate (PA) and D-glyceraldehyde (D-GA). The condensation of hydroxypyruvate and D-glyceraldehyde produces (3R,4S,5R)-3,4,5,6-tetrahydroxy-2-oxohexanoate as the major product, 2-dehydro-D-gluconate and 2-dehydro-D-galactonate. The condensation of pyruvate and D-glyceraldehyde produces 2-dehydro-3-deoxy-L-galactonate as the major product. This is Hydroxypyruvate/pyruvate aldolase from Deinococcus radiodurans (strain ATCC 13939 / DSM 20539 / JCM 16871 / CCUG 27074 / LMG 4051 / NBRC 15346 / NCIMB 9279 / VKM B-1422 / R1).